The following is a 257-amino-acid chain: UPF0246 protein Ent638_0568 (257 aa).

Belongs to the UPF0246 family.

This Enterobacter sp. (strain 638) protein is UPF0246 protein Ent638_0568.